The chain runs to 116 residues: Class I hydrophobin 1 (116 aa).

The N-terminal stretch at 1 to 19 (MLFKQAILVATTLTDLAVA) is a signal peptide. 4 cysteine pairs are disulfide-bonded: Cys35-Cys95, Cys42-Cys89, Cys43-Cys76, and Cys96-Cys109. N-linked (GlcNAc...) asparagine glycosylation is found at Asn44 and Asn100.

Belongs to the fungal hydrophobin family. Self-assembles to form functional amyloid fibrils called rodlets. Self-assembly into fibrillar rodlets occurs spontaneously at hydrophobic:hydrophilic interfaces and the rodlets further associate laterally to form amphipathic monolayers.

The protein resides in the secreted. It is found in the cell wall. Aerial growth, conidiation, and dispersal of filamentous fungi in the environment rely upon a capability of their secreting small amphipathic proteins called hydrophobins (HPBs) with low sequence identity. Class I can self-assemble into an outermost layer of rodlet bundles on aerial cell surfaces, conferring cellular hydrophobicity that supports fungal growth, development and dispersal; whereas Class II form highly ordered films at water-air interfaces through intermolecular interactions but contribute nothing to the rodlet structure. In Pleurotus ostreatus (Oyster mushroom), this protein is Class I hydrophobin 1.